Consider the following 423-residue polypeptide: COUP transcription factor 1 (423 aa).

Residues 1–81 are disordered; the sequence is MAMVVSSWRD…QGPPGSGQSQ (81 aa). A compositionally biased stretch (low complexity) spans 39–67; it reads EQQQQAGSGAPHTPQTPGQPGAPATPGTA. A DNA-binding region (nuclear receptor) is located at residues 83-158; that stretch reads HIECVVCGDK…VGMRREAVQR (76 aa). 2 NR C4-type zinc fingers span residues 86 to 106 and 122 to 146; these read CVVC…CEGC and CRAN…LKKC. Residues 184 to 410 enclose the NR LBD domain; that stretch reads YLSGYISLLL…TLIRDMLLSG (227 aa).

This sequence belongs to the nuclear hormone receptor family. NR2 subfamily. Binds DNA as dimer; homodimer and probable heterodimer with NR2F6. Interacts with GTF2B; this interaction is direct. Interacts with COPS2.

It is found in the nucleus. In terms of biological role, coup (chicken ovalbumin upstream promoter) transcription factor binds to the ovalbumin promoter and, in conjunction with another protein (S300-II) stimulates initiation of transcription. Binds to both direct repeats and palindromes of the 5'-AGGTCA-3' motif. Represses transcriptional activity of LHCG. This chain is COUP transcription factor 1 (NR2F1), found in Homo sapiens (Human).